The chain runs to 392 residues: MPKTIMLLGSGELGKEFVIAVKRLGQRVVAVDSYDDAPAQQVADRREVIDMLDGRALDAIVAKHRPDIIVPEIEAIRTERFYDYEKQGIQVVPSARAANFTMNRKAIRDLAARDLGLRTANYRYASSLEELRSAVGEVGLPCVVKPLMSSSGKGQSTVRSEAEIEAAWSYSQSGKRGDIAEVIVEAFVPFHTEITLLTVTQKNGPTLFCPPIGHRQERGDYQESWQPCRISPEQLEEAQNIAGKVTEALTGAGIWGVEFFLADDGVYFSELSPRPHDTGMVTLAGTQNLSEFELHARAVLGLPVPDITLLRAGASAVILADRVGNNPSFDGLDAALAEPGSDIRIFGKPVMRPYRRMGVALMSGEKGSDVDELKRQAIANAEKVMIKCDETV.

N(1)-(5-phospho-beta-D-ribosyl)glycinamide is bound by residues 12–13 (EL) and E72. Residues R104, K145, 150 to 155 (SSGKGQ), 185 to 188 (EAFV), and E193 contribute to the ATP site. One can recognise an ATP-grasp domain in the interval 109-300 (DLAARDLGLR…EFELHARAVL (192 aa)). The Mg(2+) site is built by E258 and E270. N(1)-(5-phospho-beta-D-ribosyl)glycinamide is bound by residues D277, K348, and 355-356 (RR).

The protein belongs to the PurK/PurT family. As to quaternary structure, homodimer.

It carries out the reaction N(1)-(5-phospho-beta-D-ribosyl)glycinamide + formate + ATP = N(2)-formyl-N(1)-(5-phospho-beta-D-ribosyl)glycinamide + ADP + phosphate + H(+). It participates in purine metabolism; IMP biosynthesis via de novo pathway; N(2)-formyl-N(1)-(5-phospho-D-ribosyl)glycinamide from N(1)-(5-phospho-D-ribosyl)glycinamide (formate route): step 1/1. Its function is as follows. Involved in the de novo purine biosynthesis. Catalyzes the transfer of formate to 5-phospho-ribosyl-glycinamide (GAR), producing 5-phospho-ribosyl-N-formylglycinamide (FGAR). Formate is provided by PurU via hydrolysis of 10-formyl-tetrahydrofolate. This is Formate-dependent phosphoribosylglycinamide formyltransferase from Chlorobaculum tepidum (strain ATCC 49652 / DSM 12025 / NBRC 103806 / TLS) (Chlorobium tepidum).